We begin with the raw amino-acid sequence, 213 residues long: ABA-inducible protein PHV A1 (213 aa).

Disordered stretches follow at residues 1 to 158 (MASN…KDKT) and 182 to 213 (NTLG…TRNH). The span at 13-23 (GETKARTEEKT) shows a compositional bias: basic and acidic residues. LEA 11-mer repeat repeat units follow at residues 27–37 (MGATKQKAGQT), 38–48 (TEATKQKAGET), 49–59 (AEATKQKTGET), 60–70 (AEAAKQKAAEA), 78–88 (AQAAKDKTYET), 89–99 (AQAAKERAAQG), 111–121 (TEAAKQKAAET), 122–132 (TEAAKQKAAEA), and 133–143 (TEAAKQKASDT). Residues 27-143 (MGATKQKAGQ…EAAKQKASDT (117 aa)) are 11 X 11 AA tandem repeats of T-E-A-A-K-Q-K-A-A-E-T. Basic and acidic residues-rich tracts occupy residues 41–74 (TKQK…KDKT), 81–98 (AKDK…RAAQ), and 109–140 (EKTE…KQKA). Residues 193-213 (ATKDATTGATVKDTTTTTRNH) are compositionally biased toward low complexity.

The protein belongs to the LEA type 4 family.

The sequence is that of ABA-inducible protein PHV A1 (HVA1) from Hordeum vulgare (Barley).